We begin with the raw amino-acid sequence, 712 residues long: Semaphorin-1A (712 aa).

The first 20 residues, Met-1–Met-20, serve as a signal peptide directing secretion. Residues Pro-21–Leu-483 enclose the Sema domain. Over Pro-21–Leu-601 the chain is Extracellular. Residues Asn-42 and Asn-69 are each glycosylated (N-linked (GlcNAc...) asparagine). Cystine bridges form between Cys-95–Cys-105 and Cys-123–Cys-132. N-linked (GlcNAc...) asparagine glycans are attached at residues Asn-161 and Asn-265. 4 disulfide bridges follow: Cys-242–Cys-357, Cys-266–Cys-316, Cys-486–Cys-503, and Cys-495–Cys-512. Residues Val-602–Phe-622 form a helical membrane-spanning segment. Residues Ser-623–Ile-712 are Cytoplasmic-facing.

It belongs to the semaphorin family.

It is found in the membrane. Plays a role in growth cones guidance. This Tribolium confusum (Confused flour beetle) protein is Semaphorin-1A (SEMA-1A).